Here is a 226-residue protein sequence, read N- to C-terminus: Beta-casein (226 aa).

The N-terminal stretch at methionine 1–alanine 15 is a signal peptide. Residue threonine 18 is modified to Phosphothreonine; in form 5-P. Serine 21 bears the Phosphoserine; in form 4-P and form 5-P mark. Phosphoserine; in form 3-P, form 4-P and form 5-P is present on serine 23. Serine 24 and serine 25 each carry phosphoserine; in form 1-P, form 2-P, form 3-P, form 4-P and form 5-P.

The protein belongs to the beta-casein family. Form 1-P is phosphorylated once; half of the molecules are phosphorylated on Ser-24, half on Ser-25. Mammary gland specific. Secreted in milk.

It localises to the secreted. Functionally, important role in determination of the surface properties of the casein micelles. The polypeptide is Beta-casein (CSN2) (Homo sapiens (Human)).